The primary structure comprises 549 residues: Chaperonin GroEL (549 aa).

Residues 29–32 (TAGP), lysine 50, 86–90 (DGTTT), glycine 417, and aspartate 499 contribute to the ATP site.

It belongs to the chaperonin (HSP60) family. In terms of assembly, forms a cylinder of 14 subunits composed of two heptameric rings stacked back-to-back. Interacts with the co-chaperonin GroES.

The protein resides in the cytoplasm. The enzyme catalyses ATP + H2O + a folded polypeptide = ADP + phosphate + an unfolded polypeptide.. In terms of biological role, together with its co-chaperonin GroES, plays an essential role in assisting protein folding. The GroEL-GroES system forms a nano-cage that allows encapsulation of the non-native substrate proteins and provides a physical environment optimized to promote and accelerate protein folding. The protein is Chaperonin GroEL of Anaplasma marginale (strain Florida).